Here is a 596-residue protein sequence, read N- to C-terminus: tRNA(Met) cytidine acetyltransferase TmcA (596 aa).

Residues glutamine 138, glycine 160 to lysine 169, and arginine 285 each bind ATP. The 154-residue stretch at serine 328 to tyrosine 481 folds into the N-acetyltransferase domain. Acetyl-CoA contacts are provided by residues isoleucine 406–valine 408 and glutamine 413–lysine 419.

It belongs to the RNA cytidine acetyltransferase family. TmcA subfamily.

The protein resides in the cytoplasm. It carries out the reaction cytidine(34) in elongator tRNA(Met) + acetyl-CoA + ATP + H2O = N(4)-acetylcytidine(34) in elongator tRNA(Met) + ADP + phosphate + CoA + H(+). Catalyzes the formation of N(4)-acetylcytidine (ac(4)C) at the wobble position of tRNA(Met), by using acetyl-CoA as an acetyl donor and ATP (or GTP). The polypeptide is tRNA(Met) cytidine acetyltransferase TmcA (Actinobacillus pleuropneumoniae serotype 5b (strain L20)).